The following is a 258-amino-acid chain: Imidazole glycerol phosphate synthase subunit HisF (258 aa).

Active-site residues include aspartate 11 and aspartate 130.

It belongs to the HisA/HisF family. As to quaternary structure, heterodimer of HisH and HisF.

Its subcellular location is the cytoplasm. It catalyses the reaction 5-[(5-phospho-1-deoxy-D-ribulos-1-ylimino)methylamino]-1-(5-phospho-beta-D-ribosyl)imidazole-4-carboxamide + L-glutamine = D-erythro-1-(imidazol-4-yl)glycerol 3-phosphate + 5-amino-1-(5-phospho-beta-D-ribosyl)imidazole-4-carboxamide + L-glutamate + H(+). Its pathway is amino-acid biosynthesis; L-histidine biosynthesis; L-histidine from 5-phospho-alpha-D-ribose 1-diphosphate: step 5/9. In terms of biological role, IGPS catalyzes the conversion of PRFAR and glutamine to IGP, AICAR and glutamate. The HisF subunit catalyzes the cyclization activity that produces IGP and AICAR from PRFAR using the ammonia provided by the HisH subunit. This chain is Imidazole glycerol phosphate synthase subunit HisF, found in Photorhabdus laumondii subsp. laumondii (strain DSM 15139 / CIP 105565 / TT01) (Photorhabdus luminescens subsp. laumondii).